A 152-amino-acid polypeptide reads, in one-letter code: Superoxide dismutase [Cu-Zn] (152 aa).

Residue Cys7 is the site of S-palmitoyl cysteine attachment. His47, His49, and His64 together coordinate Cu cation. Cys58 and Cys146 form a disulfide bridge. Zn(2+) contacts are provided by His64, His72, His81, and Asp84. Position 120 (His120) interacts with Cu cation.

It belongs to the Cu-Zn superoxide dismutase family. Homodimer. The cofactor is Cu cation. Requires Zn(2+) as cofactor.

The protein resides in the cytoplasm. It localises to the nucleus. It catalyses the reaction 2 superoxide + 2 H(+) = H2O2 + O2. Destroys radicals which are normally produced within the cells and which are toxic to biological systems. This chain is Superoxide dismutase [Cu-Zn] (sod1), found in Xiphias gladius (Swordfish).